We begin with the raw amino-acid sequence, 291 residues long: START domain-containing protein 10 (291 aa).

Met1 is subject to N-acetylmethionine. Residues 1-23 are disordered; sequence MEKPAASTEPQGSRPALGRESVQ. The region spanning 14–224 is the START domain; sequence RPALGRESVQ…MYKACIKYPE (211 aa). Residues Lys94, Lys197, and Lys202 each carry the N6-succinyllysine modification. A phosphoserine mark is found at Ser253, Ser259, Ser284, and Ser289. Residues 260-291 are disordered; that stretch reads LENIDESAVTESREERAGGAGGEGSDDDTSLT.

Post-translationally, phosphorylation at Ser-284 by CK2 negatively regulates lipid transfer activity, possibly by decreasing membrane association. As to expression, testis, kidney, liver, and intestine with the highest level in the testis.

It is found in the cell projection. It localises to the cilium. The protein resides in the flagellum. The protein localises to the cytoplasm. Its subcellular location is the membrane. Phospholipid transfer protein that preferentially selects lipid species containing a palmitoyl or stearoyl chain on the sn-1 and an unsaturated fatty acyl chain (18:1 or 18:2) on the sn-2 position. Able to transfer phosphatidylcholine (PC) and phosphatidyetanolamline (PE) between membranes. May play metabolic roles in sperm maturation or fertilization. The protein is START domain-containing protein 10 (Stard10) of Mus musculus (Mouse).